The following is a 129-amino-acid chain: Cocaine- and amphetamine-regulated transcript protein (129 aa).

A signal peptide spans 1–27 (MESSRLRLLPLLGAALLLLLPLLGARA). A Phosphotyrosine modification is found at tyrosine 41. Serine 48 carries the post-translational modification Phosphoserine. Disulfide bonds link cysteine 95/cysteine 113, cysteine 101/cysteine 121, and cysteine 115/cysteine 128.

The protein belongs to the CART family.

Its subcellular location is the secreted. Functionally, satiety factor closely associated with the actions of leptin and neuropeptide y; this anorectic peptide inhibits both normal and starvation-induced feeding and completely blocks the feeding response induced by neuropeptide Y and regulated by leptin in the hypothalamus. This is Cocaine- and amphetamine-regulated transcript protein (Cartpt) from Mus musculus (Mouse).